A 442-amino-acid polypeptide reads, in one-letter code: Alpha-1,6-mannosyl-glycoprotein 2-beta-N-acetylglucosaminyltransferase (442 aa).

At 1–9 (MRFRIYKRK) the chain is on the cytoplasmic side. A helical; Signal-anchor for type II membrane protein transmembrane segment spans residues 10–29 (VLILTLVVAACGFVLWSSNG). The Lumenal segment spans residues 30–442 (RQRKSDALGP…ELCKSYRRLQ (413 aa)). N64 and N81 each carry an N-linked (GlcNAc...) asparagine glycan. Substrate-binding positions include 118-122 (QVHNR) and D149. C191 and C205 are disulfide-bonded. 224 to 228 (QTKHH) lines the substrate pocket. D256 serves as a coordination point for Mn(2+). A disulfide bond links C278 and C281. R293 lines the substrate pocket. Cystine bridges form between C329–C352, C334–C435, and C373–C381. H369 serves as a coordination point for Mn(2+).

It belongs to the glycosyltransferase 16 (GT16) protein family. In terms of assembly, homodimer. It depends on Mn(2+) as a cofactor. In terms of tissue distribution, detected in liver, lung, testis, kidney, brain, spleen, thymus, uterus and intestine.

The protein localises to the golgi apparatus membrane. It carries out the reaction an N(4)-{beta-D-GlcNAc-(1-&gt;2)-alpha-D-Man-(1-&gt;3)-[alpha-D-Man-(1-&gt;6)]-beta-D-Man-(1-&gt;4)-beta-D-GlcNAc-(1-&gt;4)-beta-D-GlcNAc}-L-asparaginyl-[protein] + UDP-N-acetyl-alpha-D-glucosamine = N(4)-{beta-D-GlcNAc-(1-&gt;2)-alpha-D-Man-(1-&gt;3)-[beta-D-GlcNAc-(1-&gt;2)-alpha-D-Man-(1-&gt;6)]-beta-D-Man-(1-&gt;4)-beta-D-GlcNAc-(1-&gt;4)-beta-D-GlcNAc}-L-asparaginyl-[protein] + UDP + H(+). It participates in protein modification; protein glycosylation. Functionally, plays an essential role in protein N-glycosylation. Catalyzes the transfer of N-acetylglucosamine (GlcNAc) onto the free terminal mannose moiety in the core structure of the nascent N-linked glycan chain, giving rise to the second branch in complex glycans. This is Alpha-1,6-mannosyl-glycoprotein 2-beta-N-acetylglucosaminyltransferase (Mgat2) from Mus musculus (Mouse).